The following is a 224-amino-acid chain: UPF0319 protein VC_1853 (224 aa).

A signal peptide spans 1–21; it reads MKLNPLILGLLLSFSAGHSLA.

It belongs to the UPF0319 family.

This is UPF0319 protein VC_1853 from Vibrio cholerae serotype O1 (strain ATCC 39315 / El Tor Inaba N16961).